Consider the following 205-residue polypeptide: Ephrin-A1 (205 aa).

A signal peptide spans 1–17; sequence MEFLWAPLLGLCCSLAA. Positions 18–151 constitute an Ephrin RBD domain; it reads ADRHIVFWNS…KLKVTVNGKI (134 aa). Asparagine 26 carries an N-linked (GlcNAc...) asparagine glycan. 2 disulfides stabilise this stretch: cysteine 51-cysteine 92 and cysteine 80-cysteine 140. Residue serine 182 is the site of GPI-anchor amidated serine attachment. Positions 183-205 are cleaved as a propeptide — removed in mature form; sequence AAPRLFPLVWAVLLLPLLLLQTQ.

It belongs to the ephrin family. Monomer. Homodimer. Forms heterodimers with EPHA2. Binds to the receptor tyrosine kinases EPHA2, EPHA3, EPHA4, EPHA5, EPHA6 and EPHA7. Also binds with low affinity to EPHA1. In terms of processing, undergoes proteolysis by a metalloprotease to give rise to a soluble monomeric form. N-Glycosylation is required for binding to EPHA2 receptor and inducing its internalization.

It localises to the cell membrane. The protein localises to the secreted. In terms of biological role, cell surface GPI-bound ligand for Eph receptors, a family of receptor tyrosine kinases which are crucial for migration, repulsion and adhesion during neuronal, vascular and epithelial development. Binds promiscuously Eph receptors residing on adjacent cells, leading to contact-dependent bidirectional signaling into neighboring cells. Plays an important role in angiogenesis and tumor neovascularization. The recruitment of VAV2, VAV3 and PI3-kinase p85 subunit by phosphorylated EPHA2 is critical for EFNA1-induced RAC1 GTPase activation and vascular endothelial cell migration and assembly. Exerts anti-oncogenic effects in tumor cells through activation and down-regulation of EPHA2. Activates EPHA2 by inducing tyrosine phosphorylation which leads to its internalization and degradation. Acts as a negative regulator in the tumorigenesis of gliomas by down-regulating EPHA2 and FAK. Can evoke collapse of embryonic neuronal growth cone and regulates dendritic spine morphogenesis. This chain is Ephrin-A1 (Efna1), found in Rattus norvegicus (Rat).